The following is a 285-amino-acid chain: (2Z,6Z)-farnesyl diphosphate synthase CPT6, chloroplastic (285 aa).

Residues 1 to 30 constitute a chloroplast transit peptide; the sequence is MNSLFVGRPIVKSSYNVYTLPSSICGGHFF. Asp65 is a catalytic residue.

Belongs to the UPP synthase family. Mg(2+) serves as cofactor. Expressed in roots and red fruits.

It localises to the plastid. The protein resides in the chloroplast. The enzyme catalyses 2 isopentenyl diphosphate + dimethylallyl diphosphate = (2Z,6Z)-farnesyl diphosphate + 2 diphosphate. It catalyses the reaction isopentenyl diphosphate + dimethylallyl diphosphate = neryl diphosphate + diphosphate. It carries out the reaction neryl diphosphate + isopentenyl diphosphate = (2Z,6Z)-farnesyl diphosphate + diphosphate. In terms of biological role, uses neryl diphosphate to catalyze the cis-prenyl chain elongation and produce the 15 carbon product (2Z,6Z)-farnesyl diphosphate. This is (2Z,6Z)-farnesyl diphosphate synthase CPT6, chloroplastic from Solanum lycopersicum (Tomato).